Here is a 790-residue protein sequence, read N- to C-terminus: Endonuclease MutS2 (790 aa).

334–341 (GPNTGGKT) contacts ATP. Positions 713–788 (LDVRGMTLDD…GDGVTIVELH (76 aa)) constitute a Smr domain.

Belongs to the DNA mismatch repair MutS family. MutS2 subfamily. Homodimer. Binds to stalled ribosomes, contacting rRNA.

In terms of biological role, endonuclease that is involved in the suppression of homologous recombination and thus may have a key role in the control of bacterial genetic diversity. Acts as a ribosome collision sensor, splitting the ribosome into its 2 subunits. Detects stalled/collided 70S ribosomes which it binds and splits by an ATP-hydrolysis driven conformational change. Acts upstream of the ribosome quality control system (RQC), a ribosome-associated complex that mediates the extraction of incompletely synthesized nascent chains from stalled ribosomes and their subsequent degradation. Probably generates substrates for RQC. This chain is Endonuclease MutS2, found in Caldanaerobacter subterraneus subsp. tengcongensis (strain DSM 15242 / JCM 11007 / NBRC 100824 / MB4) (Thermoanaerobacter tengcongensis).